A 591-amino-acid chain; its full sequence is Aspartate--tRNA(Asp/Asn) ligase (591 aa).

L-aspartate is bound at residue E174. The segment at Q198–K201 is aspartate. R220 is a binding site for L-aspartate. Residues R220–E222 and Q229 contribute to the ATP site. An L-aspartate-binding site is contributed by H450. E483 serves as a coordination point for ATP. L-aspartate is bound at residue R490. ATP is bound at residue G535–R538.

It belongs to the class-II aminoacyl-tRNA synthetase family. Type 1 subfamily. As to quaternary structure, homodimer.

It localises to the cytoplasm. The enzyme catalyses tRNA(Asx) + L-aspartate + ATP = L-aspartyl-tRNA(Asx) + AMP + diphosphate. Aspartyl-tRNA synthetase with relaxed tRNA specificity since it is able to aspartylate not only its cognate tRNA(Asp) but also tRNA(Asn). Reaction proceeds in two steps: L-aspartate is first activated by ATP to form Asp-AMP and then transferred to the acceptor end of tRNA(Asp/Asn). The sequence is that of Aspartate--tRNA(Asp/Asn) ligase from Pseudomonas fluorescens (strain ATCC BAA-477 / NRRL B-23932 / Pf-5).